The chain runs to 218 residues: LHFPL tetraspan subfamily member 3 protein (218 aa).

Transmembrane regions (helical) follow at residues 22 to 42 (IGVL…VCFI), 96 to 116 (FFIG…GLFF), 126 to 146 (ICAW…MIFP), and 177 to 197 (ILAI…FVLG).

It belongs to the LHFP family.

The protein localises to the membrane. This is LHFPL tetraspan subfamily member 3 protein from Xenopus laevis (African clawed frog).